The following is a 137-amino-acid chain: Protein phosphatase 1 regulatory subunit 1B (137 aa).

A disordered region spans residues Asp1 to Gln137. Residue Thr33 is modified to Phosphothreonine; by PKA. Residues Leu40 to His62 show a composition bias toward basic and acidic residues. Phosphoserine is present on residues Ser44 and Ser45. Thr74 is modified (phosphothreonine; by CDK5). Positions His88–Gln99 are enriched in polar residues. Ser101 is modified (phosphoserine). Residues Gly108–Arg117 are compositionally biased toward basic and acidic residues. Residues Glu118 to Gln137 show a composition bias toward acidic residues. Ser136 carries the post-translational modification Phosphoserine.

It belongs to the protein phosphatase inhibitor 1 family. Phosphorylation of Thr-33 is required for activity. Post-translationally, dopamine- and cyclic AMP-regulated neuronal phosphoprotein.

The protein resides in the cytoplasm. Functionally, inhibitor of protein-phosphatase 1. The polypeptide is Protein phosphatase 1 regulatory subunit 1B (PPP1R1B) (Sus scrofa (Pig)).